The following is a 358-amino-acid chain: Heme A synthase (358 aa).

8 helical membrane-spanning segments follow: residues 22-42, 107-127, 133-153, 172-192, 208-228, 269-289, 302-322, and 324-344; these read IQVWLYTILLLCFAIVLVGGA, VLGRFVGLVALLGLVLFWVTK, IFLQLLTVPILIAMQGIIGWW, LAIHLIAACLVIIFVTYLSRG, FAGWLVFLILVEIYFGALVAG, FVHRCFSYFLFITAVIHALYV, AIFLCIMIVMQAFLGIITLLH, and VPISLGLIHQGGALVVLCFSV. Histidine 271 contributes to the heme binding site. Histidine 332 serves as a coordination point for heme.

The protein belongs to the COX15/CtaA family. Type 2 subfamily. Interacts with CtaB. It depends on heme b as a cofactor.

The protein resides in the cell membrane. It carries out the reaction Fe(II)-heme o + 2 A + H2O = Fe(II)-heme a + 2 AH2. It participates in porphyrin-containing compound metabolism; heme A biosynthesis; heme A from heme O: step 1/1. In terms of biological role, catalyzes the conversion of heme O to heme A by two successive hydroxylations of the methyl group at C8. The first hydroxylation forms heme I, the second hydroxylation results in an unstable dihydroxymethyl group, which spontaneously dehydrates, resulting in the formyl group of heme A. This Bartonella bacilliformis (strain ATCC 35685 / KC583 / Herrer 020/F12,63) protein is Heme A synthase.